A 337-amino-acid polypeptide reads, in one-letter code: Anthranilate phosphoribosyltransferase (337 aa).

5-phospho-alpha-D-ribose 1-diphosphate-binding positions include Gly82, 85-86 (GD), Thr90, 92-95 (NIST), 110-118 (KHGGRSVSS), and Ser122. An anthranilate-binding site is contributed by Gly82. Ser94 provides a ligand contact to Mg(2+). Arg168 is a binding site for anthranilate. Positions 226 and 227 each coordinate Mg(2+).

It belongs to the anthranilate phosphoribosyltransferase family. In terms of assembly, homodimer. It depends on Mg(2+) as a cofactor.

It catalyses the reaction N-(5-phospho-beta-D-ribosyl)anthranilate + diphosphate = 5-phospho-alpha-D-ribose 1-diphosphate + anthranilate. It participates in amino-acid biosynthesis; L-tryptophan biosynthesis; L-tryptophan from chorismate: step 2/5. In terms of biological role, catalyzes the transfer of the phosphoribosyl group of 5-phosphorylribose-1-pyrophosphate (PRPP) to anthranilate to yield N-(5'-phosphoribosyl)-anthranilate (PRA). This Francisella tularensis subsp. tularensis (strain WY96-3418) protein is Anthranilate phosphoribosyltransferase.